The following is a 196-amino-acid chain: Serine/arginine-rich splicing factor RSZ22A (196 aa).

Positions 2–71 (SRVYVGNLDP…NGWRVEQSHN (70 aa)) constitute an RRM domain. At S48 the chain carries Phosphoserine. The segment covering 58–70 (VDGKNGWRVEQSH) has biased composition (basic and acidic residues). Residues 58-196 (VDGKNGWRVE…GLKDVRRSRS (139 aa)) form a disordered region. Gly residues predominate over residues 72-87 (RGGGGGRGGGRGGGDG). Residues 88–100 (GRGRGGSDLKCYE) show a composition bias toward basic and acidic residues. A CCHC-type zinc finger spans residues 96-113 (LKCYECGESGHFARECRS). Basic residues predominate over residues 119 to 135 (GRRRSRSRSRSPPRYRK). Residues S136, S144, S146, S151, S159, S170, and S196 each carry the phosphoserine modification. Residues 139 to 149 (YGGRRSYSPRA) show a composition bias toward low complexity.

The protein belongs to the splicing factor SR family. RSZ subfamily. As to quaternary structure, component of the spliceosome. Extensively phosphorylated on serine residues in the RS domain.

Its subcellular location is the nucleus. In terms of biological role, probably involved in intron recognition and spliceosome assembly. The protein is Serine/arginine-rich splicing factor RSZ22A (RSZ22A) of Arabidopsis thaliana (Mouse-ear cress).